Here is a 460-residue protein sequence, read N- to C-terminus: Solute carrier family 52, riboflavin transporter, member 3 (460 aa).

Residues 1–6 (MAFLTH) are Cytoplasmic-facing. The helical transmembrane segment at 7 to 27 (LLVCVFGMGSWVAINGLWVEL) threads the bilayer. Over 28–37 (PLLVTELPEA) the chain is Extracellular. Residues 38-58 (WYLPSYLTVVIQLANIGPLLV) traverse the membrane as a helical segment. Residues 59–71 (TLMHRFRPGCLSE) lie on the Cytoplasmic side of the membrane. A helical membrane pass occupies residues 72–92 (VPVIFLILCVGTAACILLAFL). The Extracellular segment spans residues 93–105 (WNVTSWIQGGQHS). N-linked (GlcNAc...) asparagine glycosylation is present at Asn-94. A helical membrane pass occupies residues 106–126 (VAFIVLTFFLALVDCTSSVTF). Residues 127–137 (LPFMSQLPTYY) lie on the Cytoplasmic side of the membrane. Residues 138–158 (LTTFFIGEGLSGLLPALVALV) form a helical membrane-spanning segment. The Extracellular segment spans residues 159–211 (QGSGITTCVNVTETPGTTLNTMETPITQGNLSPSLPSPSWHQESRYLAPRFSP). Asn-168 carries an N-linked (GlcNAc...) asparagine glycan. The chain crosses the membrane as a helical span at residues 212–232 (LLFFLLLSFLTGCCLVAFFLL). Over 233-291 (QRQPWGRQGSIEDLLHSQVTLHSIRPRDTEDTSSLGAPVSSPGKGSVEASVASLRPAQL) the chain is Cytoplasmic. A phosphoserine mark is found at Ser-242 and Ser-266. A helical membrane pass occupies residues 292–312 (AFIYSVVAFVNALTNGVLPSV). Over 313 to 326 (QTYSCLPYGPVAYH) the chain is Extracellular. The chain crosses the membrane as a helical span at residues 327–347 (LSATLSSVASPLACFLPIFLP). Topologically, residues 348-350 (NRS) are cytoplasmic. The chain crosses the membrane as a helical span at residues 351-371 (LLFLGVLTVLGTGFGAYNMAM). Over 372–387 (AAMSPCPVLQGHWGGE) the chain is Extracellular. Cys-377 and Cys-454 are oxidised to a cystine. Residues 388-408 (VLIVLSWVLFAACLSYVKVML) traverse the membrane as a helical segment. Residues 409–418 (GVILRDRSRS) are Cytoplasmic-facing. The chain crosses the membrane as a helical span at residues 419 to 439 (ALLWCGAAVQLGSLIGALLMF). The Extracellular segment spans residues 440–460 (PLVNVLKLFSSADYCSLDCSV).

It belongs to the riboflavin transporter family. In terms of tissue distribution, within the small intestine, it is particularly expressed in the jujenum and the ileum. Almost negligible expression in the stomach, duodenum, and large intestine.

The protein localises to the cell membrane. It carries out the reaction riboflavin(in) = riboflavin(out). In terms of biological role, plasma membrane transporter mediating the uptake by cells of the water soluble vitamin B2/riboflavin that plays a key role in biochemical oxidation-reduction reactions of the carbohydrate, lipid, and amino acid metabolism. In Mus musculus (Mouse), this protein is Solute carrier family 52, riboflavin transporter, member 3 (Slc52a3).